Consider the following 309-residue polypeptide: NAD kinase (309 aa).

D89 functions as the Proton acceptor in the catalytic mechanism. Residues 89–90, 163–164, H174, R191, D193, and 204–209 each bind NAD(+); these read DG, NE, and TAYALS.

It belongs to the NAD kinase family. Requires a divalent metal cation as cofactor.

The protein localises to the cytoplasm. The enzyme catalyses NAD(+) + ATP = ADP + NADP(+) + H(+). Functionally, involved in the regulation of the intracellular balance of NAD and NADP, and is a key enzyme in the biosynthesis of NADP. Catalyzes specifically the phosphorylation on 2'-hydroxyl of the adenosine moiety of NAD to yield NADP. The protein is NAD kinase of Shewanella baltica (strain OS185).